Reading from the N-terminus, the 1067-residue chain is Kinesin-like protein KIF11-B (1067 aa).

The region spanning 18-359 is the Kinesin motor domain; that stretch reads NIQVVVRCRP…LDYANRAKSI (342 aa). An ATP-binding site is contributed by 105–112; it reads GQTGTGKT. Residues 365-480 are a coiled coil; it reads VNQKLTKKAL…SKEQLAQESF (116 aa). A Phosphothreonine; by CDK1 modification is found at Thr937. Phosphoserine; by NEK6 is present on Ser1046.

The protein belongs to the TRAFAC class myosin-kinesin ATPase superfamily. Kinesin family. BimC subfamily. Heterotetramer of two heavy and two light chains. Interacts with aurka. In terms of processing, phosphorylation of Thr-937 during mitosis controls the association of this protein with the spindle apparatus. A subset of this protein primarily localized at the spindle pole is phosphorylated by NEK6 during mitosis. Post-translationally, phosphorylated on a serine residue by aurka. In unfertilized eggs, shows highest expression in the germinal vesicle and radial yolk-poor channels. Also present in testis.

It is found in the cytoplasm. The protein localises to the cytoskeleton. The protein resides in the spindle pole. In terms of biological role, plus end-directed motor protein required for establishing a bipolar spindle. Associates with both interphase and spindle microtubules. May be involved in nuclear divisions taking place during the development of unfertilized eggs. Required in non-mitotic cells for transport of secretory proteins from the Golgi complex to the cell surface. This Xenopus laevis (African clawed frog) protein is Kinesin-like protein KIF11-B (kif11-b).